Here is a 555-residue protein sequence, read N- to C-terminus: Genome polyprotein (555 aa).

Over 1 to 7 (KHAQRIE) the chain is Extracellular. Residues 8–28 (TWILRHPGFTIMAAILAYTIG) traverse the membrane as a helical segment. Residues 29-34 (TTHFQR) lie on the Cytoplasmic side of the membrane. The chain crosses the membrane as a helical span at residues 35 to 49 (ALIFILLTAVAPSMT). Over 50–494 (MRCIGISNRD…LHQVFGAIYG (445 aa)) the chain is Extracellular. Intrachain disulfides connect cysteine 52/cysteine 79, cysteine 109/cysteine 170, cysteine 123/cysteine 154, and cysteine 141/cysteine 165. N-linked (GlcNAc...) asparagine; by host glycosylation is present at asparagine 116. The fusion peptide stretch occupies residues 147–160 (DRGWGNGCGLFGKG). Asparagine 202 carries an N-linked (GlcNAc...) asparagine; by host glycan. Cystine bridges form between cysteine 234-cysteine 334 and cysteine 351-cysteine 382. A helical transmembrane segment spans residues 495-515 (AAFSGVSWTMKILIGVIITWI). Residues 516–521 (GMNSRS) lie on the Cytoplasmic side of the membrane. Residues 522–542 (TSLSVSLVLVGIVTLYLEVMV) form a helical membrane-spanning segment. Over 543–555 (QADSGCVVSWKNK) the chain is Extracellular.

As to quaternary structure, homodimer; in the endoplasmic reticulum and Golgi. Interacts with protein prM. Interacts with non-structural protein 1. Homodimer; Homohexamer when secreted. Interacts with envelope protein E. In terms of processing, N-glycosylated. N-glycosylated. The excreted form is glycosylated and this is required for efficient secretion of the protein from infected cells. Post-translationally, specific enzymatic cleavages in vivo yield mature proteins. Cleavages in the lumen of endoplasmic reticulum are performed by host signal peptidase, wereas cleavages in the cytoplasmic side are performed by serine protease NS3. Signal cleavage at the 2K-4B site requires a prior NS3 protease-mediated cleavage at the 4A-2K site.

The protein localises to the virion membrane. It is found in the host endoplasmic reticulum membrane. It localises to the secreted. Its function is as follows. May play a role in virus budding. Exerts cytotoxic effects by activating a mitochondrial apoptotic pathway through M ectodomain. May display a viroporin activity. In terms of biological role, binds to host cell surface receptor and mediates fusion between viral and cellular membranes. Envelope protein is synthesized in the endoplasmic reticulum in the form of heterodimer with protein prM. They play a role in virion budding in the ER, and the newly formed immature particle is covered with 60 spikes composed of heterodimer between precursor prM and envelope protein E. The virion is transported to the Golgi apparatus where the low pH causes dissociation of PrM-E heterodimers and formation of E homodimers. prM-E cleavage is inefficient, and many virions are only partially matured. These uncleaved prM would play a role in immune evasion. Functionally, involved in immune evasion, pathogenesis and viral replication. Once cleaved off the polyprotein, is targeted to three destinations: the viral replication cycle, the plasma membrane and the extracellular compartment. Essential for viral replication. Required for formation of the replication complex and recruitment of other non-structural proteins to the ER-derived membrane structures. Excreted as a hexameric lipoparticle that plays a role against host immune response. Antagonizing the complement function. Binds to the host macrophages and dendritic cells. Inhibits signal transduction originating from Toll-like receptor 3 (TLR3). Disrupts the host endothelial glycocalyx layer of host pulmonary microvascular endothelial cells, inducing degradation of sialic acid and shedding of heparan sulfate proteoglycans. NS1 induces expression of sialidases, heparanase, and activates cathepsin L, which activates heparanase via enzymatic cleavage. These effects are probably linked to the endothelial hyperpermeability observed in severe dengue disease. The polypeptide is Genome polyprotein (Dengue virus type 2 (strain Thailand/TH-36/1958) (DENV-2)).